We begin with the raw amino-acid sequence, 1025 residues long: Multidrug resistance protein MdtC (1025 aa).

At Met-1–Leu-6 the chain is on the cytoplasmic side. Residues Phe-7–Phe-29 traverse the membrane as a helical segment. Over Arg-30–Glu-335 the chain is Periplasmic. The chain crosses the membrane as a helical span at residues Gln-336–Leu-353. Residues Arg-354–Thr-359 are Cytoplasmic-facing. Residues Ile-360–Leu-379 form a helical membrane-spanning segment. The Periplasmic portion of the chain corresponds to Cys-380–Ser-388. Residues Leu-389 to Ala-411 form a helical membrane-spanning segment. Topologically, residues Arg-412–Glu-430 are cytoplasmic. The helical transmembrane segment at Val-431–Gly-453 threads the bilayer. The Periplasmic segment spans residues Gly-454 to Leu-467. A helical transmembrane segment spans residues Ser-468 to Leu-490. Over Lys-491–Gln-852 the chain is Cytoplasmic. Residues Val-853–Val-875 form a helical membrane-spanning segment. Residues His-876 to Ala-894 are Periplasmic-facing. Residues Leu-895 to Val-917 form a helical membrane-spanning segment. Over Lys-918–Cys-947 the chain is Cytoplasmic. A helical membrane pass occupies residues Leu-948 to Leu-970. Over Ser-971–Ile-984 the chain is Periplasmic. A helical membrane pass occupies residues Thr-985–Phe-1007. Residues Phe-1008–Glu-1025 are Cytoplasmic-facing.

Belongs to the resistance-nodulation-cell division (RND) (TC 2.A.6) family. MdtC subfamily. Part of a tripartite efflux system composed of MdtA, MdtB and MdtC. MdtC forms a heteromultimer with MdtB.

Its subcellular location is the cell inner membrane. The MdtABC tripartite complex confers resistance against novobiocin and deoxycholate. The sequence is that of Multidrug resistance protein MdtC from Escherichia coli O6:H1 (strain CFT073 / ATCC 700928 / UPEC).